The chain runs to 352 residues: NAD(+)-dependent homoserine dehydrogenase (352 aa).

It belongs to the homoserine dehydrogenase family.

The catalysed reaction is L-homoserine + NAD(+) = L-aspartate 4-semialdehyde + NADH + H(+). Functionally, dehydrogenase involved in the degradation of canavanine, the delta-oxa-analog of arginine, allowing growth on canavanine as sole nitrogen and carbon source. Catalyzes the conversion of homoserine and NAD(+) to aspartate-semialdehyde and NADH. Is highly specific for NAD(+) and cannot use NADP(+). The protein is NAD(+)-dependent homoserine dehydrogenase of Pseudomonas canavaninivorans.